The following is a 232-amino-acid chain: Ribose-5-phosphate isomerase A (232 aa).

Substrate contacts are provided by residues threonine 28–threonine 31, aspartate 83–aspartate 86, and lysine 96–glycine 99. The Proton acceptor role is filled by glutamate 105. Residue lysine 123 participates in substrate binding.

Belongs to the ribose 5-phosphate isomerase family. As to quaternary structure, homodimer.

It catalyses the reaction aldehydo-D-ribose 5-phosphate = D-ribulose 5-phosphate. The protein operates within carbohydrate degradation; pentose phosphate pathway; D-ribose 5-phosphate from D-ribulose 5-phosphate (non-oxidative stage): step 1/1. Its function is as follows. Catalyzes the reversible conversion of ribose-5-phosphate to ribulose 5-phosphate. This chain is Ribose-5-phosphate isomerase A, found in Nitrobacter hamburgensis (strain DSM 10229 / NCIMB 13809 / X14).